A 119-amino-acid polypeptide reads, in one-letter code: Large ribosomal subunit protein uL18 (119 aa).

Belongs to the universal ribosomal protein uL18 family. Part of the 50S ribosomal subunit; part of the 5S rRNA/L5/L18/L25 subcomplex. Contacts the 5S and 23S rRNAs.

In terms of biological role, this is one of the proteins that bind and probably mediate the attachment of the 5S RNA into the large ribosomal subunit, where it forms part of the central protuberance. The sequence is that of Large ribosomal subunit protein uL18 from Cupriavidus necator (strain ATCC 17699 / DSM 428 / KCTC 22496 / NCIMB 10442 / H16 / Stanier 337) (Ralstonia eutropha).